A 164-amino-acid chain; its full sequence is UPF0262 protein Xaut_1232 (164 aa).

Belongs to the UPF0262 family.

The sequence is that of UPF0262 protein Xaut_1232 from Xanthobacter autotrophicus (strain ATCC BAA-1158 / Py2).